The sequence spans 543 residues: CTP synthase (543 aa).

The amidoligase domain stretch occupies residues 1–267 (MKQTKYIFVT…LNPIAEILDL (267 aa)). Residue S15 coordinates CTP. S15 lines the UTP pocket. ATP-binding positions include 16–21 (SLGKGI) and D73. Mg(2+)-binding residues include D73 and E141. CTP-binding positions include 148 to 150 (DIE), 188 to 193 (KTKPTQ), and K224. UTP is bound by residues 188 to 193 (KTKPTQ) and K224. In terms of domain architecture, Glutamine amidotransferase type-1 spans 292–543 (KIAFVGKYVD…IKAAINYEDN (252 aa)). An L-glutamine-binding site is contributed by G354. C381 acts as the Nucleophile; for glutamine hydrolysis in catalysis. L-glutamine-binding positions include 382 to 385 (LGMQ), E405, and R473. Residues H516 and E518 contribute to the active site.

It belongs to the CTP synthase family. In terms of assembly, homotetramer.

The catalysed reaction is UTP + L-glutamine + ATP + H2O = CTP + L-glutamate + ADP + phosphate + 2 H(+). It carries out the reaction L-glutamine + H2O = L-glutamate + NH4(+). It catalyses the reaction UTP + NH4(+) + ATP = CTP + ADP + phosphate + 2 H(+). Its pathway is pyrimidine metabolism; CTP biosynthesis via de novo pathway; CTP from UDP: step 2/2. Its activity is regulated as follows. Allosterically activated by GTP, when glutamine is the substrate; GTP has no effect on the reaction when ammonia is the substrate. The allosteric effector GTP functions by stabilizing the protein conformation that binds the tetrahedral intermediate(s) formed during glutamine hydrolysis. Inhibited by the product CTP, via allosteric rather than competitive inhibition. Its function is as follows. Catalyzes the ATP-dependent amination of UTP to CTP with either L-glutamine or ammonia as the source of nitrogen. Regulates intracellular CTP levels through interactions with the four ribonucleotide triphosphates. In Campylobacter jejuni subsp. doylei (strain ATCC BAA-1458 / RM4099 / 269.97), this protein is CTP synthase.